A 396-amino-acid chain; its full sequence is Actin-related protein 6 (396 aa).

Thr-2 carries the N-acetylthreonine modification. Position 260 is an N6-acetyllysine (Lys-260).

Belongs to the actin family. ARP6 subfamily. Component of the chromatin-remodeling SRCAP complex composed of at least SRCAP, DMAP1, RUVBL1, RUVBL2, ACTL6A, YEATS4, ACTR6 and ZNHIT1. Interacts with CBX1, CBX3 and CBX5.

It is found in the cytoplasm. It localises to the cytoskeleton. Its subcellular location is the nucleus. The protein localises to the nucleolus. Required for formation and/or maintenance of proper nucleolar structure and function. Plays a dual role in the regulation of ribosomal DNA (rDNA) transcription. In the presence of high glucose, maintains active rDNA transcription through H2A.Z deposition and under glucose starvation, is required for the repression of rDNA transcription, and this function may be independent of H2A.Z. The polypeptide is Actin-related protein 6 (ACTR6) (Homo sapiens (Human)).